Consider the following 547-residue polypeptide: MDTRRLILVLIFTFSSFMLWENWQKYNQPKPADAVAAAPVSGAAPTPSAALQAKAAPGTPPVATPVSTAETFSITTDLLKATISAQGGDLVSLELLNYKEHDDIQKNFDLFDAKHQYLAQAGLIGEGLPTHRTTFKHVGGATKLADGTDELKVRLESADQNGIKVAKILTFKRGSYLIDIAWEVANGSDKAIAPHAYYQLQRDDLAPAGETKMVSTFTGPAVFTDADKYQKVTFEHIADNKAKFTKTADNGWLAMVQHYFVSAWVPKDKTQREFYMRKVEGSNVFQAGVIVPVAEIAPGAKGEASVSLYAGPQMQSALKQVAPGLDLVVDYGWLTVVAAPIFWALEAIHKLVGNWGWAIVVLTIMIKAVFFPLSAASYKSMAKMKMLTPRLAQLKERFGDDKQRLNQEMMKLYQTEKVNPLGGCLPILVQIPVFIALYWVLLGAVEMRGAPWILWIKDLASADPYYILPVIMMVSMFVQTKLNPTPPDPIQAKVMMMMPLIFGFMFFWFPAGLVLYWVVNNVLSIAQQWQITRLIDAGGKAANDAKA.

6 helical membrane passes run 6–26, 328–348, 351–371, 425–445, 459–479, and 499–519; these read LILV…WQKY, VVDY…LEAI, LVGN…AVFF, LPIL…LGAV, LASA…MFVQ, and PLIF…YWVV.

Belongs to the OXA1/ALB3/YidC family. Type 1 subfamily. In terms of assembly, interacts with the Sec translocase complex via SecD. Specifically interacts with transmembrane segments of nascent integral membrane proteins during membrane integration.

Its subcellular location is the cell inner membrane. Required for the insertion and/or proper folding and/or complex formation of integral membrane proteins into the membrane. Involved in integration of membrane proteins that insert both dependently and independently of the Sec translocase complex, as well as at least some lipoproteins. Aids folding of multispanning membrane proteins. In Dechloromonas aromatica (strain RCB), this protein is Membrane protein insertase YidC.